Here is a 138-residue protein sequence, read N- to C-terminus: Protein FAM136A (138 aa).

Residue Ala2 is modified to N-acetylalanine. 2 positions are modified to phosphothreonine: Thr124 and Thr126.

This sequence belongs to the FAM136 family.

This chain is Protein FAM136A (FAM136A), found in Homo sapiens (Human).